The sequence spans 843 residues: Protein P (843 aa).

The segment at Met1–Gln177 is terminal protein domain (TP). The tract at residues Glu178–Leu346 is spacer. 2 disordered regions span residues Gln180 to Ser202 and Gln226 to Glu315. Residues Arg239–Thr249 show a composition bias toward basic residues. Polar residues-rich tracts occupy residues Thr262 to His277 and Pro287 to Gly299. The tract at residues Glu347 to Gln690 is polymerase/reverse transcriptase domain (RT). Positions Glu357–Ile600 constitute a Reverse transcriptase domain. Asp429, Asp551, and Asp552 together coordinate Mg(2+).

The protein belongs to the hepadnaviridae P protein family.

The catalysed reaction is DNA(n) + a 2'-deoxyribonucleoside 5'-triphosphate = DNA(n+1) + diphosphate. It carries out the reaction Endonucleolytic cleavage to 5'-phosphomonoester.. Its activity is regulated as follows. Activated by host HSP70 and HSP40 in vitro to be able to bind the epsilon loop of the pgRNA. Because deletion of the RNase H region renders the protein partly chaperone-independent, the chaperones may be needed indirectly to relieve occlusion of the RNA-binding site by this domain. Inhibited by several reverse-transcriptase inhibitors: Lamivudine, Adefovir and Entecavir. Its function is as follows. Multifunctional enzyme that converts the viral RNA genome into dsDNA in viral cytoplasmic capsids. This enzyme displays a DNA polymerase activity that can copy either DNA or RNA templates, and a ribonuclease H (RNase H) activity that cleaves the RNA strand of RNA-DNA heteroduplexes in a partially processive 3'- to 5'-endonucleasic mode. Neo-synthesized pregenomic RNA (pgRNA) are encapsidated together with the P protein, and reverse-transcribed inside the nucleocapsid. Initiation of reverse-transcription occurs first by binding the epsilon loop on the pgRNA genome, and is initiated by protein priming, thereby the 5'-end of (-)DNA is covalently linked to P protein. Partial (+)DNA is synthesized from the (-)DNA template and generates the relaxed circular DNA (RC-DNA) genome. After budding and infection, the RC-DNA migrates in the nucleus, and is converted into a plasmid-like covalently closed circular DNA (cccDNA). The activity of P protein does not seem to be necessary for cccDNA generation, and is presumably released from (+)DNA by host nuclear DNA repair machinery. The protein is Protein P of Hepatitis B virus genotype H (isolate United States/LAS2523/2002) (HBV-H).